A 255-amino-acid chain; its full sequence is High-affinity branched-chain amino acid transport ATP-binding protein LivG (255 aa).

Residues 6–254 form the ABC transporter domain; it reads LAVNGLMMRF…PDVIRAYLGE (249 aa). Residue 38 to 45 coordinates ATP; sequence GPNGAGKT.

Belongs to the ABC transporter superfamily.

Component of the high-affinity branched-chain amino acid transport system. The protein is High-affinity branched-chain amino acid transport ATP-binding protein LivG (livG) of Salmonella typhi.